A 1686-amino-acid polypeptide reads, in one-letter code: Thrombospondin type-1 domain-containing protein 7A (1686 aa).

A signal peptide spans 1-36 (MGLASRAPGKGGTSAGALASLFRVALLFFGLWDVQT). Residues 37 to 1635 (QTVANTRPTY…FGPDGKLKTW (1599 aa)) lie on the Extracellular side of the membrane. 3 TSP type-1 domains span residues 44 to 103 (PTYI…RVCD), 107 to 181 (ELYD…IPCP), and 183 to 236 (DCVV…GKCE). A glycan (N-linked (GlcNAc...) asparagine) is linked at Asn223. Positions 257 to 321 (IRQARDTGEA…EKKRMRDPET (65 aa)) are disordered. Basic and acidic residues-rich tracts occupy residues 259–272 (QARD…PKAE) and 294–321 (EKKE…DPET). TSP type-1 domains are found at residues 385-441 (DCEV…SPQG), 448-535 (VVYN…IPCP), 537-596 (ECEV…PSCY), 656-717 (DCVL…HPCT), 718-797 (VYHW…LPCK), 799-859 (DCVV…SVCP), 860-932 (GYRW…LPCQ), 934-985 (DCQL…QYCP), 988-1061 (KYNA…IPCP), 1063-1123 (DCKL…SDCS), 1124-1191 (QYVW…LPCP), 1193-1247 (DCVL…SNCF), 1248-1311 (HYSY…VECP), 1313-1368 (NCQL…KPCF), 1369-1439 (SWRY…VPCP), and 1441-1502 (ECYL…GQCY). Cystine bridges form between Cys460–Cys530, Cys480–Cys534, and Cys491–Cys519. Residue Asn475 is glycosylated (N-linked (GlcNAc...) asparagine). The N-linked (GlcNAc...) asparagine glycan is linked to Asn525. Intrachain disulfides connect Cys657/Cys699 and Cys668/Cys672. The N-linked (GlcNAc...) asparagine glycan is linked to Asn701. Cystine bridges form between Cys711/Cys716, Cys729/Cys792, Cys756/Cys796, Cys767/Cys780, Cys800/Cys842, Cys811/Cys815, and Cys852/Cys858. Residue Asn739 is glycosylated (N-linked (GlcNAc...) asparagine). Asn996 carries N-linked (GlcNAc...) asparagine glycosylation. Disulfide bonds link Cys1000–Cys1056, Cys1022–Cys1060, Cys1033–Cys1046, Cys1064–Cys1101, Cys1075–Cys1079, and Cys1118–Cys1122. A glycan (N-linked (GlcNAc...) asparagine) is linked at Asn1071. N-linked (GlcNAc...) asparagine glycosylation is present at Asn1212. Cys1240 and Cys1246 are joined by a disulfide. Asn1252 carries an N-linked (GlcNAc...) asparagine glycan. Intrachain disulfides connect Cys1259–Cys1306, Cys1267–Cys1310, Cys1278–Cys1291, Cys1314–Cys1352, Cys1325–Cys1329, Cys1362–Cys1367, Cys1378–Cys1434, Cys1385–Cys1438, Cys1396–Cys1415, Cys1442–Cys1486, Cys1453–Cys1457, and Cys1496–Cys1501. N-linked (GlcNAc...) asparagine glycosylation occurs at Asn1303. An N-linked (GlcNAc...) asparagine glycan is attached at Asn1393. An N-linked (GlcNAc...) asparagine glycan is attached at Asn1527. A helical transmembrane segment spans residues 1636–1656 (VYGVAAGAFVLLVFIVSMTYL). At 1657–1686 (ACKKPKKPQRRQMNNRLKPLTLAYDGDADM) the chain is on the cytoplasmic side.

In terms of processing, extensively N-glycosylated.

It localises to the cell membrane. Its subcellular location is the cell projection. Its function is as follows. Required for normal sprouting angiogenesis and normal embryonic development of intersegmental vessels (ISV). Required for normal function of the glomerular filtration barrier. Required for normal axon outgrowth on embryonic motor neurons at the level of the horizontal myoseptum. Required for normal expression of notch1b, suggesting that its functions in angiogenesis and neuron outgrowth are due to decreased expression of notch1b. Plays a role in actin cytoskeleton rearrangement. This Danio rerio (Zebrafish) protein is Thrombospondin type-1 domain-containing protein 7A.